Here is an 887-residue protein sequence, read N- to C-terminus: Oxysterol-binding protein-related protein 3 (887 aa).

The tract at residues Met-1–Trp-35 is disordered. Ser-16 and Ser-34 each carry phosphoserine. Residues Ser-16 to Gln-32 are compositionally biased toward low complexity. In terms of domain architecture, PH spans Pro-51 to Met-146. Residues His-161–Thr-167 carry the FFAT 1 motif. 3 positions are modified to phosphoserine: Ser-200, Ser-251, and Ser-265. The segment at Gly-261–Ser-326 is disordered. A compositionally biased stretch (basic residues) spans Lys-268 to Ala-280. Ser-304, Ser-309, Ser-320, Ser-323, Ser-371, Ser-372, Ser-410, Ser-425, Ser-437, and Ser-440 each carry phosphoserine. An FFAT 2 motif is present at residues Glu-450–Ala-454.

This sequence belongs to the OSBP family. As to quaternary structure, homodimer. Interacts with RRAS. Interacts (phosphorylated form) with VAPA. Interacts with OSBPL6. Phosphorylation is enhanced in vitro by phorbol-12-myristate-13-acetate (PMA), forskolin and calcium ionophore A23187. Phosphorylation seems to be stimulated in conditions of low cell-cell (or cell-matrix) adhesion. Expressed in a subset of small lymphocytes (at protein level). Expressed at high concentration in kidney, lymph node and thymus. Expressed at moderate concentration in stomach, jejunum, ileum, appendix, spleen, leukocytes, trachea, lung and thyroid gland. Expressed at low concentration in whole brain, esophagus, duodenum, ileocecum, colon, skeletal muscle, bone marrow, placenta and mammary gland. Isoform 1a, isoform 1b, isoform 1c and isoform 1d are highly expressed in brain, bone marrow, colon, kidney, lung, skeletal muscle, spleen, thymus and thyroid. Not expressed in heart and liver. Isoform 2a, isoform 2b, isoform 2c and isoform 2d are expressed in brain, bone marrow, kidney, skeletal muscle, spleen, thymus and thyroid. Not expressed in heart, liver and lung.

The protein resides in the endoplasmic reticulum membrane. It is found in the cytoplasm. The protein localises to the cytosol. It localises to the cell membrane. Its subcellular location is the cell projection. The protein resides in the filopodium tip. It is found in the nucleus membrane. Functionally, phosphoinositide-binding protein which associates with both cell and endoplasmic reticulum (ER) membranes. Can bind to the ER membrane protein VAPA and recruit VAPA to plasma membrane sites, thus linking these intracellular compartments. The ORP3-VAPA complex stimulates RRAS signaling which in turn attenuates integrin beta-1 (ITGB1) activation at the cell surface. With VAPA, may regulate ER morphology. Has a role in regulation of the actin cytoskeleton, cell polarity and cell adhesion. Binds to phosphoinositides with preference for PI(3,4)P2 and PI(3,4,5)P3. Also binds 25-hydroxycholesterol and cholesterol. The sequence is that of Oxysterol-binding protein-related protein 3 (OSBPL3) from Homo sapiens (Human).